The primary structure comprises 100 residues: MKISEEEVRHVAALSKLSFSESETIEFATTLSKIVDMVELLNEVDTTGVAITTTMADKKNIMRADIAETGVDRKFLFQNVPEKENHFIKVPAILDDGGDA.

This sequence belongs to the GatC family. Heterotrimer of A, B and C subunits.

The catalysed reaction is L-glutamyl-tRNA(Gln) + L-glutamine + ATP + H2O = L-glutaminyl-tRNA(Gln) + L-glutamate + ADP + phosphate + H(+). It carries out the reaction L-aspartyl-tRNA(Asn) + L-glutamine + ATP + H2O = L-asparaginyl-tRNA(Asn) + L-glutamate + ADP + phosphate + 2 H(+). In terms of biological role, allows the formation of correctly charged Asn-tRNA(Asn) or Gln-tRNA(Gln) through the transamidation of misacylated Asp-tRNA(Asn) or Glu-tRNA(Gln) in organisms which lack either or both of asparaginyl-tRNA or glutaminyl-tRNA synthetases. The reaction takes place in the presence of glutamine and ATP through an activated phospho-Asp-tRNA(Asn) or phospho-Glu-tRNA(Gln). The protein is Aspartyl/glutamyl-tRNA(Asn/Gln) amidotransferase subunit C of Streptococcus equi subsp. zooepidemicus (strain H70).